The chain runs to 180 residues: Bifunctional protein PyrR (180 aa).

The short motif at 101 to 113 (VILVDDVLYTGRT) is the PRPP-binding element.

It belongs to the purine/pyrimidine phosphoribosyltransferase family. PyrR subfamily. As to quaternary structure, homodimer and homohexamer; in equilibrium.

The enzyme catalyses UMP + diphosphate = 5-phospho-alpha-D-ribose 1-diphosphate + uracil. Its function is as follows. Regulates transcriptional attenuation of the pyrimidine nucleotide (pyr) operon by binding in a uridine-dependent manner to specific sites on pyr mRNA. This disrupts an antiterminator hairpin in the RNA and favors formation of a downstream transcription terminator, leading to a reduced expression of downstream genes. Functionally, also displays a weak uracil phosphoribosyltransferase activity which is not physiologically significant. In Bacillus cytotoxicus (strain DSM 22905 / CIP 110041 / 391-98 / NVH 391-98), this protein is Bifunctional protein PyrR.